The primary structure comprises 284 residues: Pantothenate synthetase (284 aa).

An ATP-binding site is contributed by 32–39 (MGALHDGH). The Proton donor role is filled by histidine 39. Residue glutamine 63 coordinates (R)-pantoate. Glutamine 63 serves as a coordination point for beta-alanine. 149 to 152 (GEKD) lines the ATP pocket. Glutamine 155 contributes to the (R)-pantoate binding site. ATP-binding positions include isoleucine 178 and 186–189 (MSSR).

Belongs to the pantothenate synthetase family. Homodimer.

Its subcellular location is the cytoplasm. It carries out the reaction (R)-pantoate + beta-alanine + ATP = (R)-pantothenate + AMP + diphosphate + H(+). Its pathway is cofactor biosynthesis; (R)-pantothenate biosynthesis; (R)-pantothenate from (R)-pantoate and beta-alanine: step 1/1. Its function is as follows. Catalyzes the condensation of pantoate with beta-alanine in an ATP-dependent reaction via a pantoyl-adenylate intermediate. The polypeptide is Pantothenate synthetase (Roseobacter denitrificans (strain ATCC 33942 / OCh 114) (Erythrobacter sp. (strain OCh 114))).